Here is a 425-residue protein sequence, read N- to C-terminus: Alpha-muurolene synthase (425 aa).

Residues Asp-97, Asp-101, Asn-240, Ser-244, and Glu-248 each coordinate Mg(2+). The DDXXD motif motif lies at 97 to 101; sequence DNISD. Positions 348–382 are disordered; that stretch reads VAPPPPPPPPTPPPQSSDADTKKQKVKAQDGKGPV. Residues 349–362 are compositionally biased toward pro residues; the sequence is APPPPPPPPTPPPQ. Residues 366 to 377 are compositionally biased toward basic and acidic residues; sequence ADTKKQKVKAQD.

This sequence belongs to the terpene synthase family. Mg(2+) is required as a cofactor.

It catalyses the reaction (2E,6E)-farnesyl diphosphate = alpha-muurolene + diphosphate. The catalysed reaction is (2E,6E)-farnesyl diphosphate = gamma-muurolene + diphosphate. The enzyme catalyses (2E,6E)-farnesyl diphosphate = (+)-(R)-germacrene A + diphosphate. In terms of biological role, sesquiterpene synthase that catalyzes the formation of alpha-muurolene, and at lower level (+)-(R)-germacrene A and gamma-muurolene. The sequence is that of Alpha-muurolene synthase (COP3) from Coprinopsis cinerea (strain Okayama-7 / 130 / ATCC MYA-4618 / FGSC 9003) (Inky cap fungus).